Reading from the N-terminus, the 222-residue chain is Protein GrpE (222 aa).

The tract at residues 1–64 is disordered; that stretch reads MSDQNLGQGS…GEEILSDDDL (64 aa). A compositionally biased stretch (basic and acidic residues) spans 16 to 44; sequence EEPIVRDKRRIDPETGKVREPQDLSHEEL. Positions 54–64 are enriched in acidic residues; it reads QGEEILSDDDL.

The protein belongs to the GrpE family. In terms of assembly, homodimer.

Its subcellular location is the cytoplasm. Participates actively in the response to hyperosmotic and heat shock by preventing the aggregation of stress-denatured proteins, in association with DnaK and GrpE. It is the nucleotide exchange factor for DnaK and may function as a thermosensor. Unfolded proteins bind initially to DnaJ; upon interaction with the DnaJ-bound protein, DnaK hydrolyzes its bound ATP, resulting in the formation of a stable complex. GrpE releases ADP from DnaK; ATP binding to DnaK triggers the release of the substrate protein, thus completing the reaction cycle. Several rounds of ATP-dependent interactions between DnaJ, DnaK and GrpE are required for fully efficient folding. The sequence is that of Protein GrpE from Leifsonia xyli subsp. xyli (strain CTCB07).